The sequence spans 425 residues: Serine--tRNA ligase (425 aa).

An L-serine-binding site is contributed by 233–235 (TAE). 264 to 266 (RRE) lines the ATP pocket. Residue E287 participates in L-serine binding. 351-354 (EISS) is a binding site for ATP. S387 is a binding site for L-serine.

It belongs to the class-II aminoacyl-tRNA synthetase family. Type-1 seryl-tRNA synthetase subfamily. In terms of assembly, homodimer. The tRNA molecule binds across the dimer.

Its subcellular location is the cytoplasm. It catalyses the reaction tRNA(Ser) + L-serine + ATP = L-seryl-tRNA(Ser) + AMP + diphosphate + H(+). It carries out the reaction tRNA(Sec) + L-serine + ATP = L-seryl-tRNA(Sec) + AMP + diphosphate + H(+). Its pathway is aminoacyl-tRNA biosynthesis; selenocysteinyl-tRNA(Sec) biosynthesis; L-seryl-tRNA(Sec) from L-serine and tRNA(Sec): step 1/1. Catalyzes the attachment of serine to tRNA(Ser). Is also able to aminoacylate tRNA(Sec) with serine, to form the misacylated tRNA L-seryl-tRNA(Sec), which will be further converted into selenocysteinyl-tRNA(Sec). The protein is Serine--tRNA ligase of Thermotoga neapolitana (strain ATCC 49049 / DSM 4359 / NBRC 107923 / NS-E).